Consider the following 847-residue polypeptide: Alanine--tRNA ligase (847 aa).

Zn(2+) is bound by residues H554, H558, C656, and H660.

This sequence belongs to the class-II aminoacyl-tRNA synthetase family. Zn(2+) is required as a cofactor.

The protein localises to the cytoplasm. It catalyses the reaction tRNA(Ala) + L-alanine + ATP = L-alanyl-tRNA(Ala) + AMP + diphosphate. Functionally, catalyzes the attachment of alanine to tRNA(Ala) in a two-step reaction: alanine is first activated by ATP to form Ala-AMP and then transferred to the acceptor end of tRNA(Ala). Also edits incorrectly charged Ser-tRNA(Ala) and Gly-tRNA(Ala) via its editing domain. The sequence is that of Alanine--tRNA ligase from Helicobacter pylori (strain Shi470).